Consider the following 365-residue polypeptide: Probable caffeine synthase 2 (365 aa).

An S-adenosyl-L-homocysteine-binding site is contributed by Tyr19. Position 26 (Thr26) interacts with caffeine. 5 residues coordinate S-adenosyl-L-homocysteine: Cys62, Asp99, Leu100, Ser134, and Phe135. The caffeine site is built by Tyr152, His155, and Trp156. A Mg(2+)-binding site is contributed by Asn173. A caffeine-binding site is contributed by Arg221. Mg(2+) contacts are provided by Asp259, Phe261, and Asn262. Phe317 is a caffeine binding site.

The protein belongs to the methyltransferase superfamily. Type-7 methyltransferase family. Mg(2+) is required as a cofactor.

It catalyses the reaction 7-methylxanthine + S-adenosyl-L-methionine = theobromine + S-adenosyl-L-homocysteine + H(+). The catalysed reaction is theobromine + S-adenosyl-L-methionine = caffeine + S-adenosyl-L-homocysteine + H(+). The enzyme catalyses 1,7-dimethylxanthine + S-adenosyl-L-methionine = caffeine + S-adenosyl-L-homocysteine + H(+). The protein operates within alkaloid biosynthesis. Its function is as follows. May be involved in the biosynthesis of caffeine. Catalyzes the conversion of 7-methylxanthine (7mX) to theobromine and of theobromine to caffeine. Has 1-N-methylation activity. The polypeptide is Probable caffeine synthase 2 (Camellia sinensis (Tea plant)).